A 528-amino-acid polypeptide reads, in one-letter code: MKGDYWRTHCIMDCSLLVFALICGSIIGYFLYSFFNQKKLEEKKQAFDDKLKEKEKDLQQREQEMMRNAKIEITSLRQKLELDLEQRTNTIVDLESKNNRREELFNNRTESLNKREEHLDSEQQIISHTKKNLEQQIKEQETILNTQKQQLEKIASLTQDQARQIIMKETRDQTTYEMMSYIKQEEEKAKSEASKKAKTLLVLAMQKYAGDITGEKNISVVNIPNEDMKGRIIGRQGRNIKSLEVLTGVDLIIDESPCTIILSSFDPIRREIAKKTLEFLVSDGRIHPSRIEKALETSTIEVDNFIKEMGEEAAFITKIGEVHPDLIKILGKLHFRISYSQNVLKHSLEVAFLAGKLASEIGENEILARRAGLFHDIGKALDHEMEGSHVEIGVFIASKYKEKKEVIDAIASHHEDQEPQSIIAVLVAIADTLSSARPGARKESVENYIQRLTKLETIANATEGVAKSYAIQAGREIRVIVEPDKIADNFIFQTARTIKEQIEKDISYNGVIKVTVIRETRAVEMAKL.

A helical transmembrane segment spans residues 15 to 35 (SLLVFALICGSIIGYFLYSFF). Residues 217–277 (NISVVNIPNE…IRREIAKKTL (61 aa)) form the KH domain. The region spanning 343-436 (VLKHSLEVAF…VAIADTLSSA (94 aa)) is the HD domain.

It belongs to the RNase Y family.

Its subcellular location is the cell membrane. In terms of biological role, endoribonuclease that initiates mRNA decay. This Onion yellows phytoplasma (strain OY-M) protein is Ribonuclease Y.